The chain runs to 214 residues: Holliday junction branch migration complex subunit RuvA (214 aa).

The domain I stretch occupies residues 1-63; it reads MISSLRGTVL…EDSLTLFGFP (63 aa). Positions 64–139 are domain II; the sequence is GPDELRAFEL…KLFVTQPRTR (76 aa). The segment at 139–143 is flexible linker; it reads RSASS. Residues 144 to 214 form a domain III region; sequence AASTVTADVV…APAAAQAADR (71 aa).

This sequence belongs to the RuvA family. In terms of assembly, homotetramer. Forms an RuvA(8)-RuvB(12)-Holliday junction (HJ) complex. HJ DNA is sandwiched between 2 RuvA tetramers; dsDNA enters through RuvA and exits via RuvB. An RuvB hexamer assembles on each DNA strand where it exits the tetramer. Each RuvB hexamer is contacted by two RuvA subunits (via domain III) on 2 adjacent RuvB subunits; this complex drives branch migration. In the full resolvosome a probable DNA-RuvA(4)-RuvB(12)-RuvC(2) complex forms which resolves the HJ.

The protein localises to the cytoplasm. In terms of biological role, the RuvA-RuvB-RuvC complex processes Holliday junction (HJ) DNA during genetic recombination and DNA repair, while the RuvA-RuvB complex plays an important role in the rescue of blocked DNA replication forks via replication fork reversal (RFR). RuvA specifically binds to HJ cruciform DNA, conferring on it an open structure. The RuvB hexamer acts as an ATP-dependent pump, pulling dsDNA into and through the RuvAB complex. HJ branch migration allows RuvC to scan DNA until it finds its consensus sequence, where it cleaves and resolves the cruciform DNA. This is Holliday junction branch migration complex subunit RuvA from Clavibacter sepedonicus (Clavibacter michiganensis subsp. sepedonicus).